A 717-amino-acid polypeptide reads, in one-letter code: Polyribonucleotide nucleotidyltransferase (717 aa).

Mg(2+)-binding residues include D488 and D494. The region spanning 555-614 (PRIEVMNIPVDKIREVIGSGGKVIREIVEKTGAKINIDDDGTVKIASASAKEIEAARKWI) is the KH domain. The S1 motif domain maps to 624-692 (GQVYEGTVVK…ERGKVRLSMK (69 aa)).

This sequence belongs to the polyribonucleotide nucleotidyltransferase family. Requires Mg(2+) as cofactor.

Its subcellular location is the cytoplasm. The catalysed reaction is RNA(n+1) + phosphate = RNA(n) + a ribonucleoside 5'-diphosphate. Functionally, involved in mRNA degradation. Catalyzes the phosphorolysis of single-stranded polyribonucleotides processively in the 3'- to 5'-direction. In Rhizobium meliloti (strain 1021) (Ensifer meliloti), this protein is Polyribonucleotide nucleotidyltransferase.